Consider the following 344-residue polypeptide: N-acetyl-gamma-glutamyl-phosphate reductase (344 aa).

Cys-148 is a catalytic residue.

Belongs to the NAGSA dehydrogenase family. Type 1 subfamily.

The protein resides in the cytoplasm. It carries out the reaction N-acetyl-L-glutamate 5-semialdehyde + phosphate + NADP(+) = N-acetyl-L-glutamyl 5-phosphate + NADPH + H(+). The protein operates within amino-acid biosynthesis; L-arginine biosynthesis; N(2)-acetyl-L-ornithine from L-glutamate: step 3/4. In terms of biological role, catalyzes the NADPH-dependent reduction of N-acetyl-5-glutamyl phosphate to yield N-acetyl-L-glutamate 5-semialdehyde. This is N-acetyl-gamma-glutamyl-phosphate reductase from Clostridium botulinum (strain Eklund 17B / Type B).